A 698-amino-acid polypeptide reads, in one-letter code: Serotransferrin (698 aa).

The signal sequence occupies residues 1–19 (MRLAVGALLVCAVLGLCLA). Transferrin-like domains lie at 25–347 (VRWC…NLRE) and 361–683 (VKWC…NLRK). 2 disulfides stabilise this stretch: Cys28/Cys67 and Cys38/Cys58. At Arg42 the chain carries Dimethylated arginine. Ser51 carries O-linked (GalNAc...) serine glycosylation. Asp82 and Tyr114 together coordinate Fe(3+). Intrachain disulfides connect Cys137–Cys213, Cys156–Cys350, Cys177–Cys193, Cys180–Cys198, Cys190–Cys196, Cys246–Cys260, Cys358–Cys615, Cys364–Cys396, Cys374–Cys387, Cys421–Cys693, Cys437–Cys656, Cys469–Cys542, Cys493–Cys684, Cys503–Cys517, Cys514–Cys525, Cys582–Cys596, and Cys634–Cys639. 4 residues coordinate hydrogencarbonate: Thr139, Arg143, Ala145, and Gly146. Tyr207 contributes to the Fe(3+) binding site. His268 is a Fe(3+) binding site. Ser389 bears the Phosphoserine; by FAM20C mark. Residue Asp411 coordinates Fe(3+). N-linked (GlcNAc...) (complex) asparagine glycosylation occurs at Asn432. A Fe(3+)-binding site is contributed by Tyr445. Residues Thr471, Arg475, Ala477, and Gly478 each contribute to the hydrogencarbonate site. Asn491 is a glycosylation site (N-linked (GlcNAc...) asparagine; atypical; partial). Tyr536 contacts Fe(3+). His604 is a Fe(3+) binding site. N-linked (GlcNAc...) (complex) asparagine glycosylation occurs at Asn630. A Phosphoserine; by FAM20C modification is found at Ser685.

Belongs to the transferrin family. Monomer. Part of a complex composed of SLC40A1/ferroportin, TF/transferrin and HEPH/hephaestin that transfers iron from cells to transferrin. As to quaternary structure, (Microbial infection) Binds to Neisseria transferrin-binding protein A (tbpA or tbp1). Forms a large complex with TbpA and TbpB. In terms of assembly, (Microbial infection) Binds to Neisseria transferrin-binding protein B (tbpb or tbp2). In terms of tissue distribution, expressed by the liver and secreted in plasma.

Its subcellular location is the secreted. Its function is as follows. Transferrins are iron binding transport proteins which can bind two Fe(3+) ions in association with the binding of an anion, usually bicarbonate. It is responsible for the transport of iron from sites of absorption and heme degradation to those of storage and utilization. Serum transferrin may also have a further role in stimulating cell proliferation. (Microbial infection) Serves as an iron source for Neisseria species, which capture the protein and extract its iron for their own use. Functionally, (Microbial infection) Serves as an iron source for parasite T.brucei (strain 427), which capture TF via its own transferrin receptor ESAG6:ESAG7 and extract its iron for its own use. This chain is Serotransferrin, found in Homo sapiens (Human).